The sequence spans 259 residues: Ras-related protein Rab-34 (259 aa).

Methionine 1 bears the N-acetylmethionine mark. 8 residues coordinate GTP: serine 62, valine 63, glycine 64, lysine 65, threonine 66, aspartate 78, tyrosine 81, and threonine 84. Threonine 66 contributes to the Mg(2+) binding site. The Switch 1 motif lies at 71 to 89 (RFCKDTFDKNYKATIGVDF). 2 residues coordinate Mg(2+): threonine 84 and aspartate 107. The short motif at 108–127 (TAGQERFKCIASTYYRGAQA) is the Switch 2 element. GTP-binding residues include glycine 110, lysine 167, aspartate 169, and serine 198. Residue serine 241 is modified to Phosphoserine. S-geranylgeranyl cysteine attachment occurs at residues cysteine 257 and cysteine 258.

The protein belongs to the small GTPase superfamily. Rab family. In terms of assembly, interacts with RILP. The GTP-bound form interacts with REP15. Mg(2+) serves as cofactor.

It is found in the cytoplasm. It localises to the golgi apparatus. The protein resides in the cytoplasmic vesicle. Its subcellular location is the phagosome. The protein localises to the phagosome membrane. It is found in the cell projection. It localises to the cilium. The protein resides in the cytoskeleton. Its subcellular location is the microtubule organizing center. The protein localises to the centrosome. It is found in the centriole. It carries out the reaction GTP + H2O = GDP + phosphate + H(+). Regulated by guanine nucleotide exchange factors (GEFs) which promote the exchange of bound GDP for free GTP. Regulated by GTPase activating proteins (GAPs) which increase the GTP hydrolysis activity. Inhibited by GDP dissociation inhibitors (GDIs). Functionally, the small GTPases Rab are key regulators of intracellular membrane trafficking, from the formation of transport vesicles to their fusion with membranes. Rabs cycle between an inactive GDP-bound form and an active GTP-bound form that is able to recruit to membranes different sets of downstream effectors directly responsible for vesicle formation, movement, tethering and fusion. RAB34 transports protein involved in the redistribution of lysosomes to the peri-Golgi region. Plays a role in the maturation of phagosomes that engulf pathogens, such as S.aureus and M.tuberculosis. Plays a role in the fusion of phagosomes with lysosomes. Required for the early steps of intracellular ciliogenesis, the cilium assembly pathway initiated by trafficking and docking of ciliary vesicles to the centrioles in the cytoplasm, followed by axoneme formation in the cytoplasm. After axoneme elongation, the centrioles migrate close to the cell surface so that ciliary vesicles can fuse with the plasma membrane to expose cilia to the extracellular space. It seems dispensable for ciliogenesis via the extracellular pathway where cilium assembly begins after migration and docking of the centriole to the plasma membrane. Also acts as a positive regulator of hedgehog signaling and regulates ciliary function. In Mus musculus (Mouse), this protein is Ras-related protein Rab-34.